Consider the following 142-residue polypeptide: MFIGEYQHSLDSKNRMIVPAKLREDLGEMFVITKGLDGCIYAYTINEWRILENKLKTLPLTNKDARAFVRFFFSGACIVDLDKQGRGLIPQNLKEYAGIEKDIVSIGVLSRVEIWSREKWINYNESDIDYDLIAEKMNDLGI.

SpoVT-AbrB domains follow at residues 5-47 and 76-119; these read EYQH…TINE and ACIV…SREK.

It belongs to the MraZ family. In terms of assembly, forms oligomers.

The protein resides in the cytoplasm. Its subcellular location is the nucleoid. This is Transcriptional regulator MraZ from Clostridium botulinum (strain Eklund 17B / Type B).